A 491-amino-acid chain; its full sequence is tRNA-2-methylthio-N(6)-dimethylallyladenosine synthase (491 aa).

In terms of domain architecture, MTTase N-terminal spans Arg3–His119. Residues Cys12, Cys48, Cys82, Cys156, Cys160, and Cys163 each contribute to the [4Fe-4S] cluster site. The Radical SAM core domain occupies Arg142–Asp372. Residues Lys375–Ile446 enclose the TRAM domain.

The protein belongs to the methylthiotransferase family. MiaB subfamily. As to quaternary structure, monomer. Requires [4Fe-4S] cluster as cofactor.

It is found in the cytoplasm. It carries out the reaction N(6)-dimethylallyladenosine(37) in tRNA + (sulfur carrier)-SH + AH2 + 2 S-adenosyl-L-methionine = 2-methylsulfanyl-N(6)-dimethylallyladenosine(37) in tRNA + (sulfur carrier)-H + 5'-deoxyadenosine + L-methionine + A + S-adenosyl-L-homocysteine + 2 H(+). Its function is as follows. Catalyzes the methylthiolation of N6-(dimethylallyl)adenosine (i(6)A), leading to the formation of 2-methylthio-N6-(dimethylallyl)adenosine (ms(2)i(6)A) at position 37 in tRNAs that read codons beginning with uridine. The chain is tRNA-2-methylthio-N(6)-dimethylallyladenosine synthase from Saccharopolyspora erythraea (strain ATCC 11635 / DSM 40517 / JCM 4748 / NBRC 13426 / NCIMB 8594 / NRRL 2338).